Reading from the N-terminus, the 208-residue chain is Ribosomal RNA large subunit methyltransferase E (208 aa).

S-adenosyl-L-methionine-binding residues include Gly62, Trp64, Asp82, Asp98, and Asp123. The active-site Proton acceptor is the Lys163.

Belongs to the class I-like SAM-binding methyltransferase superfamily. RNA methyltransferase RlmE family.

Its subcellular location is the cytoplasm. It carries out the reaction uridine(2552) in 23S rRNA + S-adenosyl-L-methionine = 2'-O-methyluridine(2552) in 23S rRNA + S-adenosyl-L-homocysteine + H(+). Its function is as follows. Specifically methylates the uridine in position 2552 of 23S rRNA at the 2'-O position of the ribose in the fully assembled 50S ribosomal subunit. The chain is Ribosomal RNA large subunit methyltransferase E from Actinobacillus pleuropneumoniae serotype 5b (strain L20).